A 169-amino-acid chain; its full sequence is MSVLQVLHIPDERLRKVAKPVEEVNAEIQRIVDDMFETMYAEEGIGLAATQVDIHQRIIVIDVSENRDERLVLINPELLEKSGETGIEEGCLSIPEQRALVPRAEKVKIRALDRDGKPFELEAEGLLAICIQHEMDHLVGKLFMDYLSPLKQQRIRQKVEKLDRLKARA.

Cysteine 91 and histidine 133 together coordinate Fe cation. The active site involves glutamate 134. Histidine 137 contributes to the Fe cation binding site.

The protein belongs to the polypeptide deformylase family. Fe(2+) serves as cofactor.

The catalysed reaction is N-terminal N-formyl-L-methionyl-[peptide] + H2O = N-terminal L-methionyl-[peptide] + formate. Functionally, removes the formyl group from the N-terminal Met of newly synthesized proteins. Requires at least a dipeptide for an efficient rate of reaction. N-terminal L-methionine is a prerequisite for activity but the enzyme has broad specificity at other positions. This Escherichia coli (strain SMS-3-5 / SECEC) protein is Peptide deformylase.